The sequence spans 96 residues: Conglutin delta 4 (96 aa).

The signal sequence occupies residues 1-22; it reads MARLTILIAFVAALVLVVHTSA. Disulfide bonds link Cys29–Cys78 and Cys80–Cys91.

The protein belongs to the 2S seed storage albumins family.

The protein localises to the endoplasmic reticulum. This chain is Conglutin delta 4, found in Lupinus angustifolius (Narrow-leaved blue lupine).